The following is a 137-amino-acid chain: Large ribosomal subunit protein uL16 (137 aa).

It belongs to the universal ribosomal protein uL16 family. As to quaternary structure, part of the 50S ribosomal subunit.

Binds 23S rRNA and is also seen to make contacts with the A and possibly P site tRNAs. This chain is Large ribosomal subunit protein uL16, found in Rhodopseudomonas palustris (strain BisA53).